The sequence spans 138 residues: MKIIRFGVSVPEELLEKFDQIIAEKGYVNRSEAIRDLMRDFIVRHEWEAGDKEVAGTITMLYNHDEADVVKELLDLQHDYLNEIISSIHVHMDEHNCLEVVIVKGKAKRIKEIADRLLSLKGVKHGKLVMTGTGKELV.

The Ni(2+) site is built by His78, His89, His91, and Cys97.

It belongs to the transcriptional regulatory CopG/NikR family. It depends on Ni(2+) as a cofactor.

In terms of biological role, transcriptional regulator. This chain is Putative nickel-responsive regulator, found in Thermococcus kodakarensis (strain ATCC BAA-918 / JCM 12380 / KOD1) (Pyrococcus kodakaraensis (strain KOD1)).